Here is a 269-residue protein sequence, read N- to C-terminus: 4-hydroxy-tetrahydrodipicolinate reductase (269 aa).

NAD(+)-binding positions include 9–14 (GCAGKM), Asp35, 102–104 (GTT), and 128–131 (APNF). The active-site Proton donor/acceptor is the His158. His159 contacts (S)-2,3,4,5-tetrahydrodipicolinate. The active-site Proton donor is the Lys162. Position 168-169 (168-169 (GT)) interacts with (S)-2,3,4,5-tetrahydrodipicolinate.

Belongs to the DapB family.

The protein resides in the cytoplasm. The catalysed reaction is (S)-2,3,4,5-tetrahydrodipicolinate + NAD(+) + H2O = (2S,4S)-4-hydroxy-2,3,4,5-tetrahydrodipicolinate + NADH + H(+). The enzyme catalyses (S)-2,3,4,5-tetrahydrodipicolinate + NADP(+) + H2O = (2S,4S)-4-hydroxy-2,3,4,5-tetrahydrodipicolinate + NADPH + H(+). It participates in amino-acid biosynthesis; L-lysine biosynthesis via DAP pathway; (S)-tetrahydrodipicolinate from L-aspartate: step 4/4. Its function is as follows. Catalyzes the conversion of 4-hydroxy-tetrahydrodipicolinate (HTPA) to tetrahydrodipicolinate. This Gloeobacter violaceus (strain ATCC 29082 / PCC 7421) protein is 4-hydroxy-tetrahydrodipicolinate reductase.